We begin with the raw amino-acid sequence, 509 residues long: Activin receptor type-1 (509 aa).

An N-terminal signal peptide occupies residues 1-20; that stretch reads MVDGVMILPVLIMIALPSPS. The Extracellular portion of the chain corresponds to 21 to 123; sequence MEDEKPKVNP…FPGTQNFHLE (103 aa). An N-linked (GlcNAc...) asparagine glycan is attached at Asn-102. Residues 124–146 form a helical membrane-spanning segment; that stretch reads VGLIILSVVFAVCLLACLLGVAL. At 147 to 509 the chain is on the cytoplasmic side; sequence RKFKRRNQER…NSLDKLKTDC (363 aa). Residues 178 to 207 enclose the GS domain; the sequence is STLADLLDHSCTSGSGSGLPFLVQRTVARQ. A Protein kinase domain is found at 208-502; that stretch reads ITLLECVGKG…KTLTKIDNSL (295 aa). ATP is bound by residues 214–222 and Lys-235; that span reads VGKGRYGEV. The Proton acceptor role is filled by Asp-336. Ser-501 carries the phosphoserine modification.

It belongs to the protein kinase superfamily. TKL Ser/Thr protein kinase family. TGFB receptor subfamily. In terms of assembly, interacts with FKBP1A. Interacts with FCHO1. Interacts with CLU. Interacts with type II receptors AMHR2 and ACVR2A. Interacts with BMP7. Interacts with GDF2/BMP9. Interacts with BMP6 (when glycosylated); the interaction may induce HAMP expression. Interacts with TSC22D1/TSC-22. It depends on Mg(2+) as a cofactor. Requires Mn(2+) as cofactor. Expressed in normal parenchymal cells, endothelial cells, fibroblasts and tumor-derived epithelial cells.

The protein localises to the membrane. It carries out the reaction L-threonyl-[receptor-protein] + ATP = O-phospho-L-threonyl-[receptor-protein] + ADP + H(+). The catalysed reaction is L-seryl-[receptor-protein] + ATP = O-phospho-L-seryl-[receptor-protein] + ADP + H(+). Bone morphogenetic protein (BMP) type I receptor that is involved in a wide variety of biological processes, including bone, heart, cartilage, nervous, and reproductive system development and regulation. As a type I receptor, forms heterotetrameric receptor complexes with the type II receptors AMHR2, ACVR2A or ACVR2B. Upon binding of ligands such as BMP7 or GDF2/BMP9 to the heteromeric complexes, type II receptors transphosphorylate ACVR1 intracellular domain. In turn, ACVR1 kinase domain is activated and subsequently phosphorylates SMAD1/5/8 proteins that transduce the signal. In addition to its role in mediating BMP pathway-specific signaling, suppresses TGFbeta/activin pathway signaling by interfering with the binding of activin to its type II receptor. Besides canonical SMAD signaling, can activate non-canonical pathways such as p38 mitogen-activated protein kinases/MAPKs. May promote the expression of HAMP, potentially via its interaction with BMP6. This Homo sapiens (Human) protein is Activin receptor type-1 (ACVR1).